A 609-amino-acid chain; its full sequence is Zinc metalloproteinase/disintegrin-like HR1a (609 aa).

An N-terminal signal peptide occupies residues 1–20 (MIQVLLVTICLAVFPYQGSS). Residues 21–190 (IILGSGNVND…KKASKLVVTA (170 aa)) constitute a propeptide that is removed on maturation. Positions 200–396 (RFIELVIVAD…DEPQCILNEP (197 aa)) constitute a Peptidase M12B domain. Residues Glu203 and Asp287 each coordinate Ca(2+). The N-linked (GlcNAc...) asparagine glycan is linked to Asn298. Intrachain disulfides connect Cys311-Cys391, Cys351-Cys375, and Cys353-Cys358. His336 is a Zn(2+) binding site. Glu337 is a catalytic residue. Positions 340 and 346 each coordinate Zn(2+). Asn350 is a glycosylation site (N-linked (GlcNAc...) asparagine). The N-linked (GlcNAc...) asparagine glycan is linked to Asn374. Positions 391 and 394 each coordinate Ca(2+). The propeptide occupies 397 to 400 (LRTD). The region spanning 404–490 (PPVCGNELLE…DCPTDRFHRN (87 aa)) is the Disintegrin domain. Residues Val406, Asn409, Leu411, Glu413, Glu416, and Asp419 each coordinate Ca(2+). 22 cysteine pairs are disulfide-bonded: Cys407-Cys426, Cys407-Cys436, Cys418-Cys431, Cys418-Cys436, Cys420-Cys426, Cys430-Cys453, Cys444-Cys450, Cys449-Cys475, Cys462-Cys482, Cys469-Cys494, Cys469-Cys501, Cys494-Cys506, Cys501-Cys506, Cys513-Cys528, Cys513-Cys563, Cys528-Cys571, Cys541-Cys551, Cys551-Cys558, Cys558-Cys597, Cys563-Cys571, Cys591-Cys602, and Cys597-Cys602. The D/ECD-tripeptide motif lies at 468 to 470 (ECD). Ca(2+) contacts are provided by Asp470, Glu473, and Asp485. N-linked (GlcNAc...) asparagine glycosylation occurs at Asn520.

Belongs to the venom metalloproteinase (M12B) family. P-III subfamily. P-IIIb sub-subfamily. As to quaternary structure, monomer. Requires Zn(2+) as cofactor. In terms of tissue distribution, expressed by the venom gland.

The protein localises to the secreted. In terms of biological role, zinc protease that induces hemorrhage and has proteolytic activity. Has preference for Ala, His, Pro, Met, and Tyr at the P1 position, in descending order (in vitro). Predominantly prefers Val and Asp at the P3 and P2 positions, respectively. Inhibits platelet aggregation induced by ADP, thrombin, platelet-activating factor and collagen. Acts by inhibiting fibrinogen interaction with platelet receptors alpha-IIb/beta-3 (ITGA2B/ITGB3). This is Zinc metalloproteinase/disintegrin-like HR1a from Protobothrops flavoviridis (Habu).